We begin with the raw amino-acid sequence, 417 residues long: Gamma-glutamyl phosphate reductase (417 aa).

The protein belongs to the gamma-glutamyl phosphate reductase family.

The protein resides in the cytoplasm. The enzyme catalyses L-glutamate 5-semialdehyde + phosphate + NADP(+) = L-glutamyl 5-phosphate + NADPH + H(+). Its pathway is amino-acid biosynthesis; L-proline biosynthesis; L-glutamate 5-semialdehyde from L-glutamate: step 2/2. Its function is as follows. Catalyzes the NADPH-dependent reduction of L-glutamate 5-phosphate into L-glutamate 5-semialdehyde and phosphate. The product spontaneously undergoes cyclization to form 1-pyrroline-5-carboxylate. This chain is Gamma-glutamyl phosphate reductase, found in Meiothermus ruber.